The sequence spans 149 residues: Nucleoside diphosphate kinase (149 aa).

The ATP site is built by K9, F57, R85, T91, R102, and N112. H115 serves as the catalytic Pros-phosphohistidine intermediate.

The protein belongs to the NDK family. As to quaternary structure, homotetramer. Mg(2+) serves as cofactor.

It localises to the cytoplasm. The catalysed reaction is a 2'-deoxyribonucleoside 5'-diphosphate + ATP = a 2'-deoxyribonucleoside 5'-triphosphate + ADP. It carries out the reaction a ribonucleoside 5'-diphosphate + ATP = a ribonucleoside 5'-triphosphate + ADP. Major role in the synthesis of nucleoside triphosphates other than ATP. The ATP gamma phosphate is transferred to the NDP beta phosphate via a ping-pong mechanism, using a phosphorylated active-site intermediate. The polypeptide is Nucleoside diphosphate kinase (Heliobacterium modesticaldum (strain ATCC 51547 / Ice1)).